The primary structure comprises 1039 residues: Multidrug resistance protein MdtB (1039 aa).

11 consecutive transmembrane segments (helical) span residues 15–37, 345–362, 367–389, 396–418, 438–460, 472–494, 535–557, 866–888, 908–930, 967–989, and 999–1021; these read LFIM…GIIG, FELM…YLFL, ATII…MVFL, LTLM…VIEN, GEIG…PLLF, FAIT…TPMM, HPWL…WVFI, VWLI…ESFI, LMIA…IGIV, ILMT…GVGA, and MVGG…YLLF.

Belongs to the resistance-nodulation-cell division (RND) (TC 2.A.6) family. MdtB subfamily. Part of a tripartite efflux system composed of MdtA, MdtB and MdtC. MdtB forms a heteromultimer with MdtC.

The protein resides in the cell inner membrane. The chain is Multidrug resistance protein MdtB from Shigella flexneri.